The chain runs to 255 residues: 5'-nucleotidase SurE (255 aa).

Positions 8, 9, 40, and 93 each coordinate a divalent metal cation.

This sequence belongs to the SurE nucleotidase family. Requires a divalent metal cation as cofactor.

The protein resides in the cytoplasm. The catalysed reaction is a ribonucleoside 5'-phosphate + H2O = a ribonucleoside + phosphate. Nucleotidase that shows phosphatase activity on nucleoside 5'-monophosphates. The chain is 5'-nucleotidase SurE from Rhodopseudomonas palustris (strain HaA2).